Reading from the N-terminus, the 362-residue chain is 3-isopropylmalate dehydrogenase (362 aa).

78–91 is a binding site for NAD(+); sequence GYKWDSLPPHQRPE. Residues R98, R108, R136, and D226 each contribute to the substrate site. Positions 226, 250, and 254 each coordinate Mg(2+). 284-296 provides a ligand contact to NAD(+); it reads GSAPDIAGQDKAN.

The protein belongs to the isocitrate and isopropylmalate dehydrogenases family. LeuB type 1 subfamily. In terms of assembly, homodimer. The cofactor is Mg(2+). It depends on Mn(2+) as a cofactor.

The protein localises to the cytoplasm. The catalysed reaction is (2R,3S)-3-isopropylmalate + NAD(+) = 4-methyl-2-oxopentanoate + CO2 + NADH. The protein operates within amino-acid biosynthesis; L-leucine biosynthesis; L-leucine from 3-methyl-2-oxobutanoate: step 3/4. Catalyzes the oxidation of 3-carboxy-2-hydroxy-4-methylpentanoate (3-isopropylmalate) to 3-carboxy-4-methyl-2-oxopentanoate. The product decarboxylates to 4-methyl-2 oxopentanoate. The polypeptide is 3-isopropylmalate dehydrogenase (Nostoc sp. (strain PCC 7120 / SAG 25.82 / UTEX 2576)).